The sequence spans 1770 residues: AF4/FMR2 family member lilli (1770 aa).

Low complexity-rich tracts occupy residues 1–19, 154–204, and 227–269; these read MAQQQQQQQQQQHLQHPHQ, LGHS…YLKQ, and PSSS…GTTP. 6 disordered regions span residues 1-28, 134-327, 402-660, 761-805, 822-1173, and 1291-1390; these read MAQQQQQQQQQQHLQHPHQNTNSNNQLQ, SRHA…EKDI, TSLL…PGNV, LHSA…LQLP, MQKA…KQGQ, and KHEH…QISK. The span at 402-414 shows a compositional bias: polar residues; it reads TSLLTTPPHASQG. Positions 434-447 are enriched in low complexity; sequence KAAAALSPTAAAKP. The span at 448–461 shows a compositional bias: basic and acidic residues; it reads LKTEKNHTLEKQDS. Residues 463-474 are compositionally biased toward acidic residues; the sequence is LENDLELSESED. A phosphoserine mark is found at serine 470 and serine 472. A compositionally biased stretch (low complexity) spans 483 to 503; the sequence is SAGNSSNSSESDSSESGSESS. Residues 511-520 are compositionally biased toward basic residues; sequence QHHHHNHHHQ. The span at 521-552 shows a compositional bias: low complexity; that stretch reads QQQQQLQQQQQQQLLQQKQQHQQILQQQQRQL. A compositionally biased stretch (gly residues) spans 582 to 614; that stretch reads FGSGGAGNGGCSTASSGGGGGGSGSGGGSGSSS. Residues 615 to 625 show a composition bias toward low complexity; sequence GIGTMSSGSSS. 2 stretches are compositionally biased toward polar residues: residues 626 to 638 and 647 to 659; these read NKTPSPTESNKWT and ANQTSSESVSPGN. The span at 768–800 shows a compositional bias: low complexity; sequence SDSGTSGSGSTSSSSSSSDSAPGEVVPMPGPGE. A compositionally biased stretch (basic residues) spans 844–854; that stretch reads QRQKKPRKKKP. Residues serine 863 and serine 864 each carry the phosphoserine modification. Low complexity-rich tracts occupy residues 880–893, 909–928, 994–1028, 1071–1081, and 1111–1131; these read AAAAAAAQAQATAT, QQQSGGSGNLSSASAGSSSQ, ANASAVAAASSSSDEDSSSSTGSTGSKSSSSSSSS, SGSSSPSSSSS, and SQHSQQLSSSECSSSSGSSTS. Residues 900–912 constitute a DNA-binding region (a.T hook); the sequence is KKGRGRPRKQQQS. Residues serine 920 and serine 922 each carry the phosphoserine modification. Basic and acidic residues-rich tracts occupy residues 1295–1312 and 1321–1355; these read PHPVKPEPELDAGYESKF and FQLKQERDRERERERDRDRERERERERDREREREQ. Serine 1442 is modified (phosphoserine). 2 stretches are compositionally biased toward low complexity: residues 1483 to 1499 and 1656 to 1676; these read AAATATAATSTTGTSTA and GNTPSSISPSNSVGSQGSGSN. 2 disordered regions span residues 1483–1502 and 1656–1683; these read AAATATAATSTTGTSTAPPA and GNTPSSISPSNSVGSQGSGSNTPPGKIV.

The protein belongs to the AF4 family.

The protein resides in the nucleus. Functionally, has a role in transcriptional regulation. Acts in parallel with the Ras/MAPK and the PI3K/PKB pathways in the control of cell identity and cellular growth. Essential for regulation of the cytoskeleton and cell growth but not for cell proliferation or growth rate. Required specifically for the microtubule-based basal transport of lipid droplets. Plays a partially redundant function downstream of Raf in cell fate specification in the developing eye. Pair-rule protein that regulates embryonic cellularization, gastrulation and segmentation. The polypeptide is AF4/FMR2 family member lilli (Drosophila pseudoobscura pseudoobscura (Fruit fly)).